The chain runs to 395 residues: Probable FMNH2-dependent monooxygenase SfnC (395 aa).

In terms of biological role, involved in the dimethyl sulfide degradation pathway. This Pseudomonas putida (Arthrobacter siderocapsulatus) protein is Probable FMNH2-dependent monooxygenase SfnC.